The primary structure comprises 251 residues: 3-deoxy-manno-octulosonate cytidylyltransferase (251 aa).

Belongs to the KdsB family.

The protein resides in the cytoplasm. It carries out the reaction 3-deoxy-alpha-D-manno-oct-2-ulosonate + CTP = CMP-3-deoxy-beta-D-manno-octulosonate + diphosphate. It functions in the pathway nucleotide-sugar biosynthesis; CMP-3-deoxy-D-manno-octulosonate biosynthesis; CMP-3-deoxy-D-manno-octulosonate from 3-deoxy-D-manno-octulosonate and CTP: step 1/1. It participates in bacterial outer membrane biogenesis; lipopolysaccharide biosynthesis. In terms of biological role, activates KDO (a required 8-carbon sugar) for incorporation into bacterial lipopolysaccharide in Gram-negative bacteria. This Parabacteroides distasonis (strain ATCC 8503 / DSM 20701 / CIP 104284 / JCM 5825 / NCTC 11152) protein is 3-deoxy-manno-octulosonate cytidylyltransferase.